The chain runs to 394 residues: MAKAKFERTKPHVNIGTIGHVDHGKTSLTAAITIVLAKTGGAKATAYDQIDAAPEEKERGITISTAHVEYETKNRHYAHVDCPGHADYVKNMITGAAQMDGAILVVSAADGPMPQTREHILLAKQVGVPAMVVFLNKVDMVDDPDLLELVEMEVRELLSKYGFPGDEIPVIKGSALQALEGKPEGEKAINELMDAVDSYIPQPVRATDKPFLMPIEDVFSISGRGTVVTGRVESGIIKVGEEIEIVGLKDTQKTTCTGVEMFRKLLDEGQSGDNVGILLRGTKREEVERGQVLAKPGSIKPHDKFEAEVYVLSKEEGGRHTPFTNDYRPQFYFRTTDVTGTIKLPFDKQMVMPGDNATFTVELIKPIAMQEGLKFSIREGGRTVGAGVVTKINN.

One can recognise a tr-type G domain in the interval 10-204 (KPHVNIGTIG…AVDSYIPQPV (195 aa)). Residues 19–26 (GHVDHGKT) form a G1 region. Residue 19-26 (GHVDHGKT) participates in GTP binding. T26 is a Mg(2+) binding site. Residues 60-64 (GITIS) are G2. A G3 region spans residues 81-84 (DCPG). GTP is bound by residues 81–85 (DCPGH) and 136–139 (NKVD). The G4 stretch occupies residues 136–139 (NKVD). Residues 174–176 (SAL) are G5.

This sequence belongs to the TRAFAC class translation factor GTPase superfamily. Classic translation factor GTPase family. EF-Tu/EF-1A subfamily. As to quaternary structure, monomer.

It is found in the cytoplasm. The catalysed reaction is GTP + H2O = GDP + phosphate + H(+). GTP hydrolase that promotes the GTP-dependent binding of aminoacyl-tRNA to the A-site of ribosomes during protein biosynthesis. The chain is Elongation factor Tu from Rickettsia helvetica.